A 408-amino-acid chain; its full sequence is Snake venom 5'-nucleotidase (408 aa).

Zn(2+)-binding residues include H54 and H77. N167 and N181 each carry an N-linked (GlcNAc...) asparagine glycan. 2 cysteine pairs are disulfide-bonded: C187-C192 and C199-C221. Residue R188 coordinates AMP. AMP is bound by residues N224, R229, and F252. C311 and C314 are disulfide-bonded. The AMP site is built by F335 and D341. 2 propeptides (removed in mature form) span residues 385–388 (DGTL) and 385–408 (DGTL…FFIL).

The protein belongs to the 5'-nucleotidase family. In terms of assembly, homodimer. Venom 5'-nucleotidases (or a part thereof) may be released into the venom via exosome-like vesicles. They may be attached via a GPI anchor to the membrane of these vesicles. Soluble forms of 5'-nucleotidase might be released by cleavage of the ectodomain in the exosome-like vesicles or venom gland cells. Expressed by the venom gland.

Its subcellular location is the membrane. It catalyses the reaction a ribonucleoside 5'-phosphate + H2O = a ribonucleoside + phosphate. The enzyme catalyses AMP + H2O = adenosine + phosphate. The catalysed reaction is GMP + H2O = guanosine + phosphate. It carries out the reaction ADP + H2O = AMP + phosphate + H(+). Is potently inhibited by metal ions Fe(3+), Cu(2+) and Zn(2+). Is enhanced by Mn(2+). Ca(2+) and Mg(2+) have no effect. Hydrolyzes nucleotides into nucleosides. Prefers AMP as the substrate but also cleaves GMP and ADP. Does not affect AMP, cAMP and cGMP. Inhibits ADP- and collagen-induced platelet aggregation. Snake venom 5'-nucleotidases are widely distributed among venomous snake taxa, but there is a lack of information about their biological activities. They have been shown to inhibit platelet aggregation. This effect may be due to the liberation of inhibitory AMP or adenosine by its action on ADP released upon initiation of aggregation. Venom 5'-nucleotidases are also known to synergistically act in vivo with other toxins like ADPases, phospholipases, and disintegrins to exert a more pronounced anti-coagulant effect. The sequence is that of Snake venom 5'-nucleotidase from Macrovipera lebetinus (Levantine viper).